Here is a 285-residue protein sequence, read N- to C-terminus: ATP phosphoribosyltransferase (285 aa).

Belongs to the ATP phosphoribosyltransferase family. Long subfamily. The cofactor is Mg(2+).

It is found in the cytoplasm. It catalyses the reaction 1-(5-phospho-beta-D-ribosyl)-ATP + diphosphate = 5-phospho-alpha-D-ribose 1-diphosphate + ATP. It functions in the pathway amino-acid biosynthesis; L-histidine biosynthesis; L-histidine from 5-phospho-alpha-D-ribose 1-diphosphate: step 1/9. Feedback inhibited by histidine. Its function is as follows. Catalyzes the condensation of ATP and 5-phosphoribose 1-diphosphate to form N'-(5'-phosphoribosyl)-ATP (PR-ATP). Has a crucial role in the pathway because the rate of histidine biosynthesis seems to be controlled primarily by regulation of HisG enzymatic activity. The sequence is that of ATP phosphoribosyltransferase from Metallosphaera sedula (strain ATCC 51363 / DSM 5348 / JCM 9185 / NBRC 15509 / TH2).